We begin with the raw amino-acid sequence, 1203 residues long: Probable phospholipid-transporting ATPase 11 (1203 aa).

Residues 1–71 (MTKCRRRRLH…STKYTLASFI (71 aa)) are Cytoplasmic-facing. Residues 72–93 (PKSLFEQFRRVANFYFLVTGVL) form a helical membrane-spanning segment. The Extracellular portion of the chain corresponds to 94–97 (SLTA). A helical membrane pass occupies residues 98–120 (LSPYSPISALLPLTFVIAASMVK). The Cytoplasmic portion of the chain corresponds to 121-303 (EAIEDWGRKK…SRIERKMDKI (183 aa)). Residues 304–325 (IYLMFGVVFLMSFIGSIVFGIE) traverse the membrane as a helical segment. At 326–363 (TREDRVRNGGRTERWYLRPDNADIFFDPDRAPMAAVYH) the chain is on the extracellular side. The helical transmembrane segment at 364-381 (FFTAVMLYSYFIPISLYV) threads the bilayer. The Cytoplasmic portion of the chain corresponds to 382-921 (SIEIVKVLQS…HGHWCYSRIS (540 aa)). Asp429 acts as the 4-aspartylphosphate intermediate in catalysis. Asp866 and Asp870 together coordinate Mg(2+). The chain crosses the membrane as a helical span at residues 922–941 (SMICYFFYKNITFGVTVFLY). At 942-955 (EAYTSFSAQPAYND) the chain is on the extracellular side. A helical membrane pass occupies residues 956–975 (WFLSLFNVFFSSLPVIALGV). The Cytoplasmic segment spans residues 976–1005 (FDQDVSARYCYKFPLLYQEGVQNLLFSWKR). The chain crosses the membrane as a helical span at residues 1006–1028 (IIGWMFNGVFTALAIFFLCKESL). The Extracellular segment spans residues 1029–1041 (KHQLYNPNGKTAG). Residues 1042 to 1064 (REILGGTMYTCVVWVVNLQMALA) traverse the membrane as a helical segment. The Cytoplasmic portion of the chain corresponds to 1065–1070 (ISYFTW). Residues 1071–1091 (LQHIVIWGSVAFWYIFLMIYG) form a helical membrane-spanning segment. Topologically, residues 1092–1108 (AITPSFSTDAYKVFIEA) are extracellular. The helical transmembrane segment at 1109–1133 (LAPAPSYWLTTLFVMFFALIPFFVF) threads the bilayer. Topologically, residues 1134-1203 (KSVQMRFFPG…DQLNKNFIAF (70 aa)) are cytoplasmic.

This sequence belongs to the cation transport ATPase (P-type) (TC 3.A.3) family. Type IV subfamily.

It localises to the membrane. The catalysed reaction is ATP + H2O + phospholipidSide 1 = ADP + phosphate + phospholipidSide 2.. In terms of biological role, involved in transport of phospholipids. This Arabidopsis thaliana (Mouse-ear cress) protein is Probable phospholipid-transporting ATPase 11.